Here is a 90-residue protein sequence, read N- to C-terminus: UPF0237 protein MMP0657 (90 aa).

Residues 5–79 (VITVVGVDKP…SEIGVKINVQ (75 aa)) enclose the ACT domain.

Belongs to the UPF0237 family.

The polypeptide is UPF0237 protein MMP0657 (Methanococcus maripaludis (strain DSM 14266 / JCM 13030 / NBRC 101832 / S2 / LL)).